We begin with the raw amino-acid sequence, 380 residues long: 3-dehydroquinate synthase (380 aa).

Residues 118–122 (GVIGD), 142–143 (TS), K155, and K164 each bind NAD(+). The Zn(2+) site is built by E197, H259, and H278.

This sequence belongs to the sugar phosphate cyclases superfamily. Dehydroquinate synthase family. The cofactor is Co(2+). Requires Zn(2+) as cofactor. NAD(+) serves as cofactor.

Its subcellular location is the cytoplasm. The enzyme catalyses 7-phospho-2-dehydro-3-deoxy-D-arabino-heptonate = 3-dehydroquinate + phosphate. The protein operates within metabolic intermediate biosynthesis; chorismate biosynthesis; chorismate from D-erythrose 4-phosphate and phosphoenolpyruvate: step 2/7. Catalyzes the conversion of 3-deoxy-D-arabino-heptulosonate 7-phosphate (DAHP) to dehydroquinate (DHQ). In Sinorhizobium medicae (strain WSM419) (Ensifer medicae), this protein is 3-dehydroquinate synthase.